The sequence spans 473 residues: Pre-mRNA-splicing factor PRP46 (473 aa).

The span at 1 to 10 (MSTSLETPSG) shows a compositional bias: polar residues. Disordered stretches follow at residues 1–21 (MSTS…VASG) and 103–126 (GPNV…QAVA). WD repeat units lie at residues 180–219 (GHMG…LKLS), 222–261 (GHIS…VIRH), 264–303 (GHFS…NIFT), 306–347 (GHTS…NTLT), 349–388 (HKKS…FVNN), 391–429 (GHEA…PFQH), and 440–473 (DAEA…SEQA).

Belongs to the WD repeat PRL1/PRL2 family. In terms of assembly, associated with the spliceosome.

The protein localises to the cytoplasm. It localises to the nucleus. Functionally, involved in pre-mRNA splicing and required for cell cycle progression at G2/M. The protein is Pre-mRNA-splicing factor PRP46 (PRP46) of Cryptococcus neoformans var. neoformans serotype D (strain JEC21 / ATCC MYA-565) (Filobasidiella neoformans).